Consider the following 139-residue polypeptide: Mitochondrial intermembrane space import and assembly protein 40 (139 aa).

Disulfide bonds link Cys-53-Cys-55, Cys-64-Cys-97, and Cys-74-Cys-87. A CHCH domain is found at 61-105 (SGPCGEQFKSAFSCFHYSQEEIKGSDCLDQFRAMQECMQKYPDIY). 2 short sequence motifs (cx9C motif) span residues 64–74 (CGEQFKSAFSC) and 87–97 (CLDQFRAMQEC). The disordered stretch occupies residues 102 to 139 (PDIYPQEDDEDEAEKEKQNKEAEAFSTETSDTKEESSS). Residues 115-124 (EKEKQNKEAE) are compositionally biased toward basic and acidic residues.

Monomer. Can form homooligomers.

It localises to the mitochondrion intermembrane space. Central component of a redox-sensitive mitochondrial intermembrane space import machinery which is required for the biogenesis of respiratory chain complexes. Functions as chaperone and catalyzes the formation of disulfide bonds in substrate proteins, such as COX17 or MICU1. Required for the import and folding of small cysteine-containing proteins (small Tim) in the mitochondrial intermembrane space (IMS). Precursor proteins to be imported into the IMS are translocated in their reduced form into the mitochondria. This is Mitochondrial intermembrane space import and assembly protein 40 (chchd4) from Xenopus tropicalis (Western clawed frog).